Reading from the N-terminus, the 166-residue chain is MAKTLSKSSGGALAPWLGISLIVILFDQLTKIAVLKTFAYGAMHQLTPFFNLTLIYNRGAAFGFLATAGGWQRWAFTALGIGATLVICYLLKRHGHQRLFSLSLALILGGALGNVIDRLIYGHVIDFLDFHVGAWHWPAFNLADSAITVGAVLLIYDELRRVRGAR.

The next 4 helical transmembrane spans lie at 10 to 30 (GGALAPWLGISLIVILFDQLT), 46 to 66 (LTPFFNLTLIYNRGAAFGFLA), 71 to 91 (WQRWAFTALGIGATLVICYLL), and 100 to 120 (FSLSLALILGGALGNVIDRLI). Active-site residues include D126 and D144. Residues 135–155 (WHWPAFNLADSAITVGAVLLI) traverse the membrane as a helical segment.

This sequence belongs to the peptidase A8 family.

The protein resides in the cell inner membrane. It carries out the reaction Release of signal peptides from bacterial membrane prolipoproteins. Hydrolyzes -Xaa-Yaa-Zaa-|-(S,diacylglyceryl)Cys-, in which Xaa is hydrophobic (preferably Leu), and Yaa (Ala or Ser) and Zaa (Gly or Ala) have small, neutral side chains.. The protein operates within protein modification; lipoprotein biosynthesis (signal peptide cleavage). In terms of biological role, this protein specifically catalyzes the removal of signal peptides from prolipoproteins. The sequence is that of Lipoprotein signal peptidase from Burkholderia thailandensis (strain ATCC 700388 / DSM 13276 / CCUG 48851 / CIP 106301 / E264).